Reading from the N-terminus, the 223-residue chain is Deoxyribose-phosphate aldolase (223 aa).

The active-site Proton donor/acceptor is the D91. Residue K153 is the Schiff-base intermediate with acetaldehyde of the active site. The active-site Proton donor/acceptor is the K182.

Belongs to the DeoC/FbaB aldolase family. DeoC type 1 subfamily.

Its subcellular location is the cytoplasm. It carries out the reaction 2-deoxy-D-ribose 5-phosphate = D-glyceraldehyde 3-phosphate + acetaldehyde. Its pathway is carbohydrate degradation; 2-deoxy-D-ribose 1-phosphate degradation; D-glyceraldehyde 3-phosphate and acetaldehyde from 2-deoxy-alpha-D-ribose 1-phosphate: step 2/2. Functionally, catalyzes a reversible aldol reaction between acetaldehyde and D-glyceraldehyde 3-phosphate to generate 2-deoxy-D-ribose 5-phosphate. The sequence is that of Deoxyribose-phosphate aldolase from Streptococcus pyogenes serotype M4 (strain MGAS10750).